A 599-amino-acid chain; its full sequence is Elongation factor 4 (599 aa).

The tr-type G domain maps to 4–186; the sequence is DNIRNFSIIA…EIVNKIPPPR (183 aa). GTP contacts are provided by residues 16–21 and 133–136; these read DHGKST and NKID.

Belongs to the TRAFAC class translation factor GTPase superfamily. Classic translation factor GTPase family. LepA subfamily.

It is found in the cell inner membrane. The enzyme catalyses GTP + H2O = GDP + phosphate + H(+). Functionally, required for accurate and efficient protein synthesis under certain stress conditions. May act as a fidelity factor of the translation reaction, by catalyzing a one-codon backward translocation of tRNAs on improperly translocated ribosomes. Back-translocation proceeds from a post-translocation (POST) complex to a pre-translocation (PRE) complex, thus giving elongation factor G a second chance to translocate the tRNAs correctly. Binds to ribosomes in a GTP-dependent manner. The protein is Elongation factor 4 of Geotalea daltonii (strain DSM 22248 / JCM 15807 / FRC-32) (Geobacter daltonii).